We begin with the raw amino-acid sequence, 195 residues long: MDYIVSPTSSEPYEFYRDRTFRGGANGNQTNMDTSPEDITDSDEQNDTTTTTSEMSSTSSVPSIGENKVSKNNKSAGISKISDSKLIFDSDNKDQDDEDDEDDEELEGLDTEGGFVLSNSDITTSDLYNLQMRIFRSETETDDDTDSETTENVRRALNNINSRKNIFDTEDRKILNMNSTEKWTRKTIKKNNKYH.

Polar residues predominate over residues 1–11 (MDYIVSPTSSE). The tract at residues 1–118 (MDYIVSPTSS…LDTEGGFVLS (118 aa)) is disordered. A compositionally biased stretch (acidic residues) spans 35–46 (SPEDITDSDEQN). The span at 47 to 63 (DTTTTTSEMSSTSSVPS) shows a compositional bias: low complexity. Basic and acidic residues predominate over residues 82–93 (SDSKLIFDSDNK). A compositionally biased stretch (acidic residues) spans 94 to 110 (DQDDEDDEDDEELEGLD).

This is an uncharacterized protein from Acanthamoeba polyphaga mimivirus (APMV).